The following is a 243-amino-acid chain: Ornithine decarboxylase antizyme 3 (243 aa).

3 positions are modified to phosphoserine: Ser6, Ser9, and Ser12.

It belongs to the ODC antizyme family. Interacts with ODC1 and thereby sterically blocks ODC homodimerization. Interacts with AZIN2; this interaction disrupts the interaction between the antizyme and ODC1. Interacts with GGN. Isoform 2 interacts with PPP1R16A; Modulates PPP1CB activity. As to expression, testis-specific. Isoform 2 is expressed in outer dense fibers, fibrous sheath and the connecting piece of sperm.

It is found in the nucleus. The protein resides in the cytoplasm. Its subcellular location is the cell projection. It localises to the cilium. The protein localises to the flagellum. Ornithine decarboxylase (ODC) antizyme protein that negatively regulates ODC activity and intracellular polyamine biosynthesis and uptake in response to increased intracellular polyamine levels. Binds to ODC monomers, inhibiting the assembly of the functional ODC homodimers. Does not target the ODC monomers for degradation, which allows a protein synthesis-independent restoration of ODC activity. Stabilizes AZIN2 by interfering with its ubiquitination. Involved in the translocation of AZNI2 from ER-Golgi intermediate compartment (ERGIC) to the cytosol. Probably plays a key role in spermatogenesis by regulating the intracellular concentration of polyamines in haploid germ cells. Its function is as follows. Does not possess antizyme activity. Modulates PPP1CB activity through its interaction with PPP1R16A. The polypeptide is Ornithine decarboxylase antizyme 3 (Rattus norvegicus (Rat)).